The sequence spans 548 residues: T-complex protein 1 subunit theta (548 aa).

N-acetylalanine is present on A2. Y47 and G48 together coordinate ADP. Mg(2+) is bound at residue D99. The ADP site is built by G100, T101, N102, F103, M169, S170, K171, G412, and D499. 3 residues coordinate ATP: G100, T101, and N102. S170, K171, G412, D499, and K504 together coordinate ATP. Y505 carries the phosphotyrosine modification. Residues 529–548 (PAGGPKPPSGKKDWDEDQND) form a disordered region.

Component of the chaperonin-containing T-complex (TRiC), a hexadecamer composed of two identical back-to-back stacked rings enclosing a protein folding chamber. Each ring is made up of eight different subunits: TCP1/CCT1, CCT2, CCT3, CCT4, CCT5, CCT6A/CCT6, CCT7, CCT8.

The protein localises to the cytoplasm. The protein resides in the cytoskeleton. It is found in the microtubule organizing center. Its subcellular location is the centrosome. It localises to the cilium basal body. It carries out the reaction ATP + H2O = ADP + phosphate + H(+). In terms of biological role, component of the chaperonin-containing T-complex (TRiC), a molecular chaperone complex that assists the folding of actin, tubulin and other proteins upon ATP hydrolysis. This chain is T-complex protein 1 subunit theta, found in Gallus gallus (Chicken).